The sequence spans 634 residues: Threonine--tRNA ligase (634 aa).

The TGS domain maps to Met1 to Thr61. The tract at residues Asp242–Pro532 is catalytic. Zn(2+)-binding residues include Cys333, His384, and His509.

Belongs to the class-II aminoacyl-tRNA synthetase family. In terms of assembly, homodimer. The cofactor is Zn(2+).

Its subcellular location is the cytoplasm. The catalysed reaction is tRNA(Thr) + L-threonine + ATP = L-threonyl-tRNA(Thr) + AMP + diphosphate + H(+). In terms of biological role, catalyzes the attachment of threonine to tRNA(Thr) in a two-step reaction: L-threonine is first activated by ATP to form Thr-AMP and then transferred to the acceptor end of tRNA(Thr). Also edits incorrectly charged L-seryl-tRNA(Thr). The polypeptide is Threonine--tRNA ligase (Carboxydothermus hydrogenoformans (strain ATCC BAA-161 / DSM 6008 / Z-2901)).